We begin with the raw amino-acid sequence, 290 residues long: Type II restriction enzyme MjaIII (290 aa).

Belongs to the DpnII type II restriction endonuclease family.

The enzyme catalyses Endonucleolytic cleavage of DNA to give specific double-stranded fragments with terminal 5'-phosphates.. In terms of biological role, a P subtype restriction enzyme that recognizes the double-stranded sequence 5'-GATC-3'; the cleavage site is unknown. The protein is Type II restriction enzyme MjaIII (mjaIIIR) of Methanocaldococcus jannaschii (strain ATCC 43067 / DSM 2661 / JAL-1 / JCM 10045 / NBRC 100440) (Methanococcus jannaschii).